A 453-amino-acid chain; its full sequence is MARPPVVGVFTERKPMRAWDAPASVTLPGQAALPRIFDTAAGEIVQVQEDKAASLYVCGITPYDATHMGHASTYVAFDLLHRAWLDAGVPVTYVQNVTDVDDPLLERATATNVDWRELAEDQTELFRTDMKALNVIPPAHYVGVVESIEWLFPLIEDLFRRGLAYRVPGFTDEQGVVHPDGDVYLDLKAVRELPANAEGYSWAPGEVCHLTRDEMLEIFAERGGDPNRAGKRDALDPLLWRVEREGEPSWDAGELGAGRPGWHIECTMIARRFVDGSLTVQAGGNDLTFPHHDLGAGHSWAVSARPHAKHYAHTGMVGLDGHKMSKSRGNLVLVSRLRAAGEDANAVRLAIMGQHYRSDWFWTDELLEHAKARLDTYRHAVSVAEGREGSEGVTDEAAVELLTTVREALGEDLNAPAALAAVDAWAVKALADTTVGGGALVRDILAARLGVVL.

Cys58 is a Zn(2+) binding site. L-cysteinyl-5'-AMP contacts are provided by residues 58–61, Thr73, and 96–98; these read CGIT and NVT. A 'HIGH' region motif is present at residues 60–70; that stretch reads ITPYDATHMGH. Positions 221 to 226 match the 'ERGGDP' region motif; the sequence is ERGGDP. Residue Trp262 participates in L-cysteinyl-5'-AMP binding. A Zn(2+)-binding site is contributed by Cys266. 284–286 contacts L-cysteinyl-5'-AMP; that stretch reads GND. Residue His291 coordinates Zn(2+). Val317 contributes to the L-cysteinyl-5'-AMP binding site. The 'KMSKS' region motif lies at 323-327; it reads KMSKS.

The protein belongs to the class-I aminoacyl-tRNA synthetase family. MshC subfamily. In terms of assembly, monomer. The cofactor is Zn(2+).

The enzyme catalyses 1D-myo-inositol 2-amino-2-deoxy-alpha-D-glucopyranoside + L-cysteine + ATP = 1D-myo-inositol 2-(L-cysteinylamino)-2-deoxy-alpha-D-glucopyranoside + AMP + diphosphate + H(+). Its function is as follows. Catalyzes the ATP-dependent condensation of GlcN-Ins and L-cysteine to form L-Cys-GlcN-Ins. This chain is L-cysteine:1D-myo-inositol 2-amino-2-deoxy-alpha-D-glucopyranoside ligase, found in Rothia mucilaginosa (strain DY-18) (Stomatococcus mucilaginosus).